Consider the following 305-residue polypeptide: Thioredoxin reductase (305 aa).

28–35 (LGIETSSQ) contributes to the FAD binding site. A disulfide bridge connects residues Cys129 and Cys132. 272–281 (DCCDWIYRQA) serves as a coordination point for FAD.

The protein belongs to the class-II pyridine nucleotide-disulfide oxidoreductase family. Homodimer. FAD serves as cofactor.

It is found in the cytoplasm. The enzyme catalyses [thioredoxin]-dithiol + NADP(+) = [thioredoxin]-disulfide + NADPH + H(+). This chain is Thioredoxin reductase (TRXB), found in Spironucleus barkhanus.